The sequence spans 444 residues: Adenine permease AdeQ (444 aa).

Residues 1–29 (MNNDNTDYVSNESGTLSRLFKLPQHGTTV) are Cytoplasmic-facing. A helical transmembrane segment spans residues 30–53 (RTELIAGMTTFLTMVYIVFVNPQI). The Periplasmic segment spans residues 54 to 63 (LGAAQMDPKV). A helical membrane pass occupies residues 64-82 (VFVTTCLIAGIGSIAMGIF). Over 83–84 (AN) the chain is Cytoplasmic. Residues 85–101 (LPVALAPAMGLNAFFAF) form a discontinuously helical membrane-spanning segment. Residues 102-113 (VVVGAMGISWQT) lie on the Periplasmic side of the membrane. Residues 114-133 (GMGAIFWGAVGLFLLTLFRI) traverse the membrane as a helical segment. The Cytoplasmic portion of the chain corresponds to 134-145 (RYWMISNIPLSL). Residues 146 to 166 (RIGITSGIGLFIALMGLKNTG) traverse the membrane as a helical segment. Residues 167–182 (VIVANKDTLVMIGDLS) are Periplasmic-facing. The helical transmembrane segment at 183 to 200 (SHGVLLGILGFFIITVLS) threads the bilayer. The Cytoplasmic portion of the chain corresponds to 201–204 (SRHF). The helical transmembrane segment at 205–223 (HAAVLVSIVVTSCCGLFFG) threads the bilayer. Topologically, residues 224 to 251 (DVHFSGVYSIPPDISGVIGEVDLSGALT) are periplasmic. Residues 252 to 280 (LELAGIIFSFMLINLFDSSGTLIGVTDKA) form a helical membrane-spanning segment. The Cytoplasmic segment spans residues 281–293 (GLIDGNGKFPNMN). A helical membrane pass occupies residues 294-309 (KALYVDSVSSVAGAFI). The Periplasmic portion of the chain corresponds to 310 to 311 (GT). The chain crosses the membrane as a discontinuously helical span at residues 312–327 (SSVTAYIESTSGVAVG). At 328–331 (GRTG) the chain is on the cytoplasmic side. Residues 332–346 (LTAVVVGVMFLLVMF) form a helical membrane-spanning segment. Topologically, residues 347–357 (FSPLVAIVPPY) are periplasmic. The chain crosses the membrane as a helical span at residues 358–377 (ATAGALIFVGVLMTSSLARV). Residues 378-382 (NWDDF) are Cytoplasmic-facing. Residues 383–418 (TESVPAFITTVMMPFTFSITEGIALGFMSYCIMKVC) constitute an intramembrane region (discontinuously helical). The Cytoplasmic segment spans residues 419–444 (TGRWRDLNLCVVVVAALFALKIILVD).

It belongs to the nucleobase:cation symporter-2 (NCS2) (TC 2.A.40) family. Azg-like subfamily.

The protein localises to the cell inner membrane. Functionally, high-affinity transporter for adenine. The polypeptide is Adenine permease AdeQ (adeQ) (Escherichia coli (strain K12)).